The following is an 828-amino-acid chain: Periplasmic nitrate reductase (828 aa).

Residues Met1–Ala31 constitute a signal peptide (tat-type signal). The 57-residue stretch at Ile39 to Asp95 folds into the 4Fe-4S Mo/W bis-MGD-type domain. Positions 46, 49, 53, and 81 each coordinate [4Fe-4S] cluster. Mo-bis(molybdopterin guanine dinucleotide)-binding positions include Lys83, Gln150, Asn175, Cys179, Trp212–Met219, Ser243–His247, Gln262–Asp264, Met372, Gln376, Asn482, Ser508–Asp509, Lys531, Asp558, and Thr718–Thr727. Phe794 lines the substrate pocket. Residues Asn802 and Lys819 each coordinate Mo-bis(molybdopterin guanine dinucleotide).

The protein belongs to the prokaryotic molybdopterin-containing oxidoreductase family. NasA/NapA/NarB subfamily. As to quaternary structure, component of the periplasmic nitrate reductase NapAB complex composed of NapA and NapB. The cofactor is [4Fe-4S] cluster. It depends on Mo-bis(molybdopterin guanine dinucleotide) as a cofactor. Predicted to be exported by the Tat system. The position of the signal peptide cleavage has not been experimentally proven.

Its subcellular location is the periplasm. It carries out the reaction 2 Fe(II)-[cytochrome] + nitrate + 2 H(+) = 2 Fe(III)-[cytochrome] + nitrite + H2O. Catalytic subunit of the periplasmic nitrate reductase complex NapAB. Receives electrons from NapB and catalyzes the reduction of nitrate to nitrite. The polypeptide is Periplasmic nitrate reductase (Escherichia coli (strain K12 / MC4100 / BW2952)).